Consider the following 502-residue polypeptide: Probable cytosol aminopeptidase (502 aa).

Residues K267 and D272 each contribute to the Mn(2+) site. K279 is a catalytic residue. D290, D349, and E351 together coordinate Mn(2+). Residue R353 is part of the active site.

The protein belongs to the peptidase M17 family. The cofactor is Mn(2+).

The protein localises to the cytoplasm. It catalyses the reaction Release of an N-terminal amino acid, Xaa-|-Yaa-, in which Xaa is preferably Leu, but may be other amino acids including Pro although not Arg or Lys, and Yaa may be Pro. Amino acid amides and methyl esters are also readily hydrolyzed, but rates on arylamides are exceedingly low.. It carries out the reaction Release of an N-terminal amino acid, preferentially leucine, but not glutamic or aspartic acids.. Functionally, presumably involved in the processing and regular turnover of intracellular proteins. Catalyzes the removal of unsubstituted N-terminal amino acids from various peptides. The protein is Probable cytosol aminopeptidase of Aeromonas salmonicida (strain A449).